The chain runs to 52 residues: Rubredoxin-2 (52 aa).

A Rubredoxin-like domain is found at 1-52; it reads MEQWKCNICGYIYNPETGDPEGDIPAGTSFESLPDSWMCPVCGAGKEEFTKI. Fe cation contacts are provided by Cys6, Cys9, Cys39, and Cys42.

It belongs to the rubredoxin family. In terms of assembly, monomer. Fe(3+) serves as cofactor.

Serves as an electron acceptor for pyruvate ferredoxin oxidoreductase (PFOR). The sequence is that of Rubredoxin-2 (rub2) from Chlorobaculum tepidum (strain ATCC 49652 / DSM 12025 / NBRC 103806 / TLS) (Chlorobium tepidum).